A 162-amino-acid polypeptide reads, in one-letter code: Translocator protein 2 (162 aa).

The next 5 helical transmembrane spans lie at 3–23 (LQGP…CMLI), 44–64 (VILL…YLVW), 79–99 (LGLY…FLAA), 103–123 (GLAL…VFIW), and 129–149 (LAAL…AITY).

Belongs to the TspO/BZRP family. In terms of assembly, homotetramer. May also form homodimer. As to expression, expressed in liver, bone marrow and spleen. In spleen, detected in red pulp but not in white pulp.

Its subcellular location is the endoplasmic reticulum membrane. It is found in the cell membrane. Its function is as follows. Cholesterol-binding protein involved in the redistribution of cholesterol from lipid droplets to the endoplasmic reticulum. Required to meet cholesterol demands during erythropoietic differentiation. May play a role in transport processes at the plasma membrane of erythrocytes, including regulating VDAC-mediated ATP export, and import of the heme precursors protoporphyrin IX and 5-aminolevulinic acid. The polypeptide is Translocator protein 2 (Tspo2) (Mus musculus (Mouse)).